The chain runs to 269 residues: 5'-nucleotidase SurE (269 aa).

A divalent metal cation-binding residues include Asp-11, Asp-12, Ser-42, and Asn-90.

It belongs to the SurE nucleotidase family. A divalent metal cation serves as cofactor.

The protein resides in the cytoplasm. It carries out the reaction a ribonucleoside 5'-phosphate + H2O = a ribonucleoside + phosphate. In terms of biological role, nucleotidase that shows phosphatase activity on nucleoside 5'-monophosphates. The protein is 5'-nucleotidase SurE of Haloarcula marismortui (strain ATCC 43049 / DSM 3752 / JCM 8966 / VKM B-1809) (Halobacterium marismortui).